A 443-amino-acid chain; its full sequence is Protein IQ-DOMAIN 11 (443 aa).

The interval 5–20 is calmodulin-binding; sequence KGLFTVLKRIFISEVN. 2 consecutive short sequence motifs (nuclear localization signal) follow at residues 11–18 and 27–34; these read LKRIFISE and RRKWTFWK. Residues 44-65 form a disordered region; that stretch reads ITAPPEHRTSHESHEEQKEEIV. Residues 48-64 show a composition bias toward basic and acidic residues; it reads PEHRTSHESHEEQKEEI. IQ domains follow at residues 113 to 138 and 139 to 161; these read AATR…GIVK and LQAY…CLQS. The span at 277–293 shows a compositional bias: basic and acidic residues; that stretch reads FSSKTKPKDETLNEKQL. Residues 277–361 are disordered; that stretch reads FSSKTKPKDE…PRSFDTQSES (85 aa).

Belongs to the IQD family. Binds to multiple calmodulin (CaM) in the presence of Ca(2+) and CaM-like proteins. As to expression, expressed in hypocotyls, cotyledons, leaves and petioles.

It is found in the nucleus. Its subcellular location is the cytoplasm. It localises to the cytoskeleton. In terms of biological role, may be involved in cooperative interactions with calmodulins or calmodulin-like proteins. Recruits calmodulin proteins to microtubules, thus being a potential scaffold in cellular signaling and trafficking. Regulates cell shape and elongation in aerial organs (i.e. epidermis pavement cells) probably by regulating cortical microtubules (MT) arrays orientation. May associate with nucleic acids and regulate gene expression at the transcriptional or post-transcriptional level. The protein is Protein IQ-DOMAIN 11 of Arabidopsis thaliana (Mouse-ear cress).